A 139-amino-acid chain; its full sequence is NADH-quinone oxidoreductase subunit A (139 aa).

Helical transmembrane passes span 16-36, 69-89, and 94-114; these read GLFIIAVFALCALMIGAASLL, LVAMLFVIFDIEAVFLFAWAV, and VGWEGFAGAAVFIFILLAGLV.

Belongs to the complex I subunit 3 family. NDH-1 is composed of 14 different subunits. Subunits NuoA, H, J, K, L, M, N constitute the membrane sector of the complex.

It is found in the cell inner membrane. It catalyses the reaction a quinone + NADH + 5 H(+)(in) = a quinol + NAD(+) + 4 H(+)(out). Functionally, NDH-1 shuttles electrons from NADH, via FMN and iron-sulfur (Fe-S) centers, to quinones in the respiratory chain. The immediate electron acceptor for the enzyme in this species is believed to be ubiquinone. Couples the redox reaction to proton translocation (for every two electrons transferred, four hydrogen ions are translocated across the cytoplasmic membrane), and thus conserves the redox energy in a proton gradient. The polypeptide is NADH-quinone oxidoreductase subunit A (Chromohalobacter salexigens (strain ATCC BAA-138 / DSM 3043 / CIP 106854 / NCIMB 13768 / 1H11)).